Here is a 455-residue protein sequence, read N- to C-terminus: Glutamyl-tRNA reductase (455 aa).

Residues 49–52, serine 109, 114–116, and glutamine 120 each bind substrate; these read TCNR and ETQ. Cysteine 50 functions as the Nucleophile in the catalytic mechanism. Residue 189 to 194 coordinates NADP(+); that stretch reads GAGKMG.

This sequence belongs to the glutamyl-tRNA reductase family. In terms of assembly, homodimer.

The enzyme catalyses (S)-4-amino-5-oxopentanoate + tRNA(Glu) + NADP(+) = L-glutamyl-tRNA(Glu) + NADPH + H(+). It functions in the pathway porphyrin-containing compound metabolism; protoporphyrin-IX biosynthesis; 5-aminolevulinate from L-glutamyl-tRNA(Glu): step 1/2. Functionally, catalyzes the NADPH-dependent reduction of glutamyl-tRNA(Glu) to glutamate 1-semialdehyde (GSA). In Geobacillus thermodenitrificans (strain NG80-2), this protein is Glutamyl-tRNA reductase.